The chain runs to 211 residues: DNA dC-&gt;dU-editing enzyme APOBEC-3H (211 aa).

The 123-residue stretch at 4-126 (LTAKTFSLQF…RRQQEGLRLL (123 aa)) folds into the CMP/dCMP-type deaminase domain. A Zn(2+)-binding site is contributed by histidine 54. Glutamate 56 acts as the Proton donor in catalysis. Residues cysteine 85 and cysteine 88 each coordinate Zn(2+).

It belongs to the cytidine and deoxycytidylate deaminase family. Homodimer. Requires Zn(2+) as cofactor.

It is found in the cytoplasm. The catalysed reaction is a 2'-deoxycytidine in single-stranded DNA + H2O + H(+) = a 2'-deoxyuridine in single-stranded DNA + NH4(+). Its function is as follows. DNA deaminase (cytidine deaminase) which may act as an inhibitor of retrovirus replication and retrotransposon mobility via deaminase-dependent and -independent mechanisms. In Pongo pygmaeus (Bornean orangutan), this protein is DNA dC-&gt;dU-editing enzyme APOBEC-3H.